We begin with the raw amino-acid sequence, 156 residues long: MPRRRVVGQRKILPDPKFHNELLAKFINILMVDGKKSTAEKIVYGALDILAQKSEKDQLELFEEALDNIRPSVEVKSRRVGGSTYQVPVEVRPVRRNALAMRWLVEAARKRGEKSMAQRLANEMLDASDSKGSAVKKREDVHRMADANKAFAHYRW.

Belongs to the universal ribosomal protein uS7 family. In terms of assembly, part of the 30S ribosomal subunit. Contacts proteins S9 and S11.

One of the primary rRNA binding proteins, it binds directly to 16S rRNA where it nucleates assembly of the head domain of the 30S subunit. Is located at the subunit interface close to the decoding center, probably blocks exit of the E-site tRNA. In Colwellia psychrerythraea (strain 34H / ATCC BAA-681) (Vibrio psychroerythus), this protein is Small ribosomal subunit protein uS7.